The sequence spans 680 residues: WD repeat-containing protein 48 homolog (680 aa).

8 WD repeats span residues 26-65 (QHRN…SEKY), 71-110 (HHND…CMST), 113-152 (THRD…ALTA), 164-203 (GSKD…RIMK), 206-245 (GHTE…CVQT), 248-287 (VHKE…NKTL), 290-329 (EEQA…RCTL), and 350-389 (KGGA…KKEQ). Positions 592–616 (ETTPSGGNANNSLQNSQSDANSEGS) are disordered.

Belongs to the WD repeat WDR48 family. As to quaternary structure, catalytic component of the Usp12-46 deubiquitylase complex consisting of Usp12-46, Wdr20 and Uaf1; regulatory subunit that, together wtih Wdr20, stabilizes Usp12-46. The Usp12-46 deubiquitylase complex associates with arr/arrow; the interaction leads to deubiquitination and stabilization of arr/arrow.

Functionally, regulatory component of the Usp12-46 deubiquitylase complex. activates deubiquitination by increasing the catalytic turnover without increasing the affinity of deubiquitinating enzymes for the substrate. The complex deubiquitylates the wg/wingless-signaling receptor arr/arrow, which stabilizes the receptor and increases its concentration at the cell surface; this enhances the sensitivity of cells to wg/wingless-signal stimulation. This increases the amplitude and spatial range of the signaling response to the wg/wingless morphogen gradient, facilitating the precise concentration-dependent regulation of its target genes. Together with Wdr20 and Usp12-46 required for wg/wingless-mediated signaling in the wing imaginal disc and for wg/wingless-dependent regulation of intestinal stem cell proliferation. The polypeptide is WD repeat-containing protein 48 homolog (Drosophila sechellia (Fruit fly)).